A 490-amino-acid chain; its full sequence is Polyamine oxidase 2 (490 aa).

Glu-57, Arg-65, Val-246, and Glu-433 together coordinate FAD. The short motif at 488–490 (SRL) is the Microbody targeting signal element.

This sequence belongs to the flavin monoamine oxidase family. The cofactor is FAD. Highly expressed in flowers and siliques. Also found in leaf and stem and in low levels in cotyledons, roots and in seedlings.

Its subcellular location is the peroxisome. It carries out the reaction spermine + O2 + H2O = 3-aminopropanal + spermidine + H2O2. It catalyses the reaction N(1)-acetylspermine + O2 + H2O = 3-acetamidopropanal + spermidine + H2O2. The catalysed reaction is spermidine + O2 + H2O = 3-aminopropanal + putrescine + H2O2. The protein operates within amine and polyamine degradation; spermine degradation. Its pathway is amine and polyamine degradation; spermidine degradation. Its function is as follows. Flavoenzyme involved in polyamine back-conversion. Catalyzes the oxidation of the secondary amino group of polyamines, such as spermine, spermidine and their acetyl derivatives. Substrate preference is N(1)-acetylspermine &gt; spermine &gt; spermidine. Plays an important role in the regulation of polyamine intracellular concentration. Involved in abscisic acid-mediated developmental processes. May contribute to nitric oxide-mediated effects on root growth. The sequence is that of Polyamine oxidase 2 from Arabidopsis thaliana (Mouse-ear cress).